A 532-amino-acid polypeptide reads, in one-letter code: Muscarinic acetylcholine receptor M5 (532 aa).

Residues 1-29 (MEGDSYGNATTINGTPVNHQPLERHRLWE) lie on the Extracellular side of the membrane. Residue Asn8 is glycosylated (N-linked (GlcNAc...) asparagine). The chain crosses the membrane as a helical span at residues 30-53 (VITIAAVTAVVSLITIVGNVLVMI). Topologically, residues 54–66 (SFKVNSQLKTVNN) are cytoplasmic. The chain crosses the membrane as a helical span at residues 67 to 87 (YYLLSLACADLIIGIFSMNLY). Over 88 to 104 (TTYILMGRWALGSLACD) the chain is Extracellular. The helical transmembrane segment at 105–126 (LWLALDYVASNASVMNLLVISF) threads the bilayer. The Cytoplasmic portion of the chain corresponds to 127–146 (DRYFSITRPLTYRAKRTPKR). The helical transmembrane segment at 147–169 (AGIMIGLAWLISFILWAPAILCW) threads the bilayer. The Extracellular segment spans residues 170-191 (QYLVGKRTVPPDECQIQFLSEP). Residues 192 to 214 (TITFGTAIAAFYIPVSVMTILYC) form a helical membrane-spanning segment. At 215–443 (RIYRETEKRT…LVKERKAAQT (229 aa)) the chain is on the cytoplasmic side. Positions 263–294 (QRERNQASRSSSHRSTSITGKPSQATGPSTNW) are disordered. The segment covering 270-279 (SRSSSHRSTS) has biased composition (low complexity). Positions 280-294 (ITGKPSQATGPSTNW) are enriched in polar residues. A helical transmembrane segment spans residues 444 to 464 (LSAILLAFIITWTPYNIMVLV). Residues 465–478 (STFCDKCVPVALWH) are Extracellular-facing. A helical membrane pass occupies residues 479 to 498 (LGYWLCYVNSTVNPICYALC). Residues 499–532 (NRTFRKTFKMLLLCQWKKKKVEEKLYWQGNSKLP) are Cytoplasmic-facing. 2 positions are modified to phosphothreonine: Thr501 and Thr505.

Belongs to the G-protein coupled receptor 1 family. Muscarinic acetylcholine receptor subfamily. CHRM5 sub-subfamily.

It is found in the cell membrane. Its subcellular location is the postsynaptic cell membrane. Its function is as follows. The muscarinic acetylcholine receptor mediates various cellular responses, including inhibition of adenylate cyclase, breakdown of phosphoinositides and modulation of potassium channels through the action of G proteins. Primary transducing effect is Pi turnover. This chain is Muscarinic acetylcholine receptor M5 (CHRM5), found in Saimiri boliviensis boliviensis (Bolivian squirrel monkey).